We begin with the raw amino-acid sequence, 448 residues long: Exoglucanase GH7B (448 aa).

A signal peptide spans 1-17 (MSLAVVFLLGFLAVSHG). Q18 carries the post-translational modification Pyrrolidone carboxylic acid. 2 cysteine pairs are disulfide-bonded: C62–C83 and C73–C79. Substrate contacts are provided by residues Y97, 119 to 120 (DI), and K197. 6 cysteine pairs are disulfide-bonded: C154/C415, C188/C226, C192/C225, C246/C271, C254/C259, and C276/C350. The active-site Nucleophile is the E228. Substrate-binding positions include 230 to 233 (DIWE) and H244. E233 acts as the Proton donor/acceptor in catalysis. R266 and D274 together coordinate substrate. Substrate-binding residues include W396 and R412.

The protein belongs to the glycosyl hydrolase 7 (cellulase C) family. Monomer. As to expression, highly expressed in the hepatopancreas (at protein level). Little or no expression detected in the hindgut or the rest of the body (at protein level).

Its subcellular location is the secreted. It carries out the reaction Hydrolysis of (1-&gt;4)-beta-D-glucosidic linkages in cellulose and cellotetraose, releasing cellobiose from the non-reducing ends of the chains.. Functionally, exocellobiohydrolase (CBH) that catalyzes the hydrolysis of 1,4-beta-D-glucosidic bonds in cellulose to release the disaccharide cellobiose. The degradation of cellulose involves an interplay between different cellulolytic enzymes. Hydrolysis starts with endoglucanases (EGs), which cut internal beta-1,4-glucosidic bonds in cellulose to reduce the polymerization degree of the substrate and create new chain ends for exocellobiohydrolases (CBHs). The CBHs release the disaccharide cellobiose from the non-reducing end of the cellulose polymer chain. Finally, beta-1,4-glucosidases hydrolyze the cellobiose and other short cello-oligosaccharides into glucose units. The polypeptide is Exoglucanase GH7B (Limnoria quadripunctata (Gribble)).